Reading from the N-terminus, the 1479-residue chain is Type VII secretion system protein EssC (1479 aa).

Topologically, residues Met-1 to Asn-229 are cytoplasmic. A helical transmembrane segment spans residues Thr-230–Val-252. The Extracellular segment spans residues Arg-253–Gly-256. The chain crosses the membrane as a helical span at residues Ile-257–Ser-279. Over Glu-280 to Lys-1479 the chain is Cytoplasmic. FtsK domains are found at residues Asp-652–Asn-846 and Gln-997–Ser-1183. ATP contacts are provided by residues Gly-672–Ser-679 and Gly-1014–Thr-1021.

It belongs to the EssC family. As to quaternary structure, homooligomer. Interacts with EsaE.

It is found in the cell membrane. In terms of biological role, component of the type VII secretion system (Ess). Required for the secretion of substrates including EsxA and EsxB. However, unable to support secretion of the substrate protein EsxC. This Staphylococcus aureus (strain MSSA476) protein is Type VII secretion system protein EssC.